Here is a 343-residue protein sequence, read N- to C-terminus: L-threonine 3-dehydrogenase (343 aa).

Position 38 (Cys38) interacts with Zn(2+). Active-site charge relay system residues include Thr40 and His43. Zn(2+) contacts are provided by His63, Glu64, Cys93, Cys96, Cys99, and Cys107. NAD(+) contacts are provided by residues Ile175, Asp195, Arg200, 262–264 (LGI), and 286–287 (IY).

The protein belongs to the zinc-containing alcohol dehydrogenase family. In terms of assembly, homotetramer. Zn(2+) is required as a cofactor.

The protein resides in the cytoplasm. The catalysed reaction is L-threonine + NAD(+) = (2S)-2-amino-3-oxobutanoate + NADH + H(+). It participates in amino-acid degradation; L-threonine degradation via oxydo-reductase pathway; glycine from L-threonine: step 1/2. In terms of biological role, catalyzes the NAD(+)-dependent oxidation of L-threonine to 2-amino-3-ketobutyrate. This is L-threonine 3-dehydrogenase from Burkholderia thailandensis (strain ATCC 700388 / DSM 13276 / CCUG 48851 / CIP 106301 / E264).